Consider the following 206-residue polypeptide: Accelerated cell death 11 (206 aa).

Positions 60, 64, 99, 103, and 143 each coordinate an N-acylsphingoid base 1-phosphate.

The protein belongs to the GLTP family. In terms of assembly, interacts with BPA1, PRA1F2 and PRA1F3.

It is found in the cytoplasm. Functionally, exhibits selective intermembrane transfer of ceramide-1-phosphate (C1P) and phytoceramide-1-phosphate. Does not transport ceramide (Cer) or GalCer, suggesting a requirement for phosphate in the headgroup for functionality. Transports in vitro sphingosine, but not glycosphingolipids. Also has some in vitro activity with sphingomyelin, a lipid not detected in plant tissues. The transport function may be not directly involved in regulating cell death. Rather, perturbations in the function of ACD11 or related components could be monitored by R-proteins, which then mediate defense and programmed cell death (PCD), as proposed in the guard hypothesis. C1P transfer is stimulated by phosphatidylserine in C1P source vesicles. Regulates autophagy, inflammasome mediated IL1B and IL18 processing, and pyroptosis, but not apoptosis. The sequence is that of Accelerated cell death 11 from Arabidopsis thaliana (Mouse-ear cress).